We begin with the raw amino-acid sequence, 265 residues long: Apolipoprotein A-I (265 aa).

Residues 1-18 (MKALVLTLAVLFFTGSQA) form the signal peptide. Repeat copies occupy residues 67-88 (LKLL…EQLG) and 89-110 (PVTQ…QEMN). A 10 X approximate tandem repeats region spans residues 67–265 (LKLLDNWDSL…DEASKKLNAQ (199 aa)). The residue at position 109 (methionine 109) is a Methionine sulfoxide. One copy of the 3; half-length repeat lies at 111–121 (KDLEEVKQKVQ). 5 tandem repeats follow at residues 122–142 (PYLD…RQKV), 144–165 (PLGE…DKLT), 166–187 (PLAE…QQLA), 188–209 (PYSD…EGGG), and 210–230 (SLAE…EKAK). One copy of the 9; half-length repeat lies at 231-241 (PALEDLRQGLL). Repeat 10 spans residues 242–265 (PVLESLKVSILAAIDEASKKLNAQ).

It belongs to the apolipoprotein A1/A4/E family. In terms of assembly, homodimer. Interacts with APOA1BP and CLU. Component of a sperm activating protein complex (SPAP), consisting of APOA1, an immunoglobulin heavy chain, an immunoglobulin light chain and albumin. Interacts with NDRG1. Interacts with SCGB3A2. Interacts with NAXE and YJEFN3. Post-translationally, glycosylated. In terms of processing, palmitoylated. Phosphorylation sites are present in the extracellular medium. As to expression, major protein of plasma HDL, also found in chylomicrons.

The protein resides in the secreted. Functionally, participates in the reverse transport of cholesterol from tissues to the liver for excretion by promoting cholesterol efflux from tissues and by acting as a cofactor for the lecithin cholesterol acyltransferase (LCAT). As part of the SPAP complex, activates spermatozoa motility. This chain is Apolipoprotein A-I (APOA1), found in Physeter macrocephalus (Sperm whale).